The sequence spans 78 residues: Sec-independent protein translocase protein TatA (78 aa).

The chain crosses the membrane as a helical span at residues 1–21 (MGSLSIWHWIVVVAVILLLFG). The segment covering 43–55 (MKDDEKTAEKPEP) has biased composition (basic and acidic residues). The tract at residues 43–78 (MKDDEKTAEKPEPVKTINHNADGSGAARSDTGSKVI) is disordered.

This sequence belongs to the TatA/E family. As to quaternary structure, the Tat system comprises two distinct complexes: a TatABC complex, containing multiple copies of TatA, TatB and TatC subunits, and a separate TatA complex, containing only TatA subunits. Substrates initially bind to the TatABC complex, which probably triggers association of the separate TatA complex to form the active translocon.

It is found in the cell inner membrane. In terms of biological role, part of the twin-arginine translocation (Tat) system that transports large folded proteins containing a characteristic twin-arginine motif in their signal peptide across membranes. TatA could form the protein-conducting channel of the Tat system. In Nitrobacter winogradskyi (strain ATCC 25391 / DSM 10237 / CIP 104748 / NCIMB 11846 / Nb-255), this protein is Sec-independent protein translocase protein TatA.